Here is a 153-residue protein sequence, read N- to C-terminus: 6,7-dimethyl-8-ribityllumazine synthase (153 aa).

Residues Phe22, 56–58 (AFE), and 80–82 (AVI) contribute to the 5-amino-6-(D-ribitylamino)uracil site. 85-86 (AT) provides a ligand contact to (2S)-2-hydroxy-3-oxobutyl phosphate. Residue His88 is the Proton donor of the active site. Phe113 is a 5-amino-6-(D-ribitylamino)uracil binding site. Arg127 lines the (2S)-2-hydroxy-3-oxobutyl phosphate pocket.

The protein belongs to the DMRL synthase family.

The catalysed reaction is (2S)-2-hydroxy-3-oxobutyl phosphate + 5-amino-6-(D-ribitylamino)uracil = 6,7-dimethyl-8-(1-D-ribityl)lumazine + phosphate + 2 H2O + H(+). Its pathway is cofactor biosynthesis; riboflavin biosynthesis; riboflavin from 2-hydroxy-3-oxobutyl phosphate and 5-amino-6-(D-ribitylamino)uracil: step 1/2. In terms of biological role, catalyzes the formation of 6,7-dimethyl-8-ribityllumazine by condensation of 5-amino-6-(D-ribitylamino)uracil with 3,4-dihydroxy-2-butanone 4-phosphate. This is the penultimate step in the biosynthesis of riboflavin. In Alkaliphilus metalliredigens (strain QYMF), this protein is 6,7-dimethyl-8-ribityllumazine synthase.